Here is a 1096-residue protein sequence, read N- to C-terminus: Pentatricopeptide repeat-containing protein At5g55840 (1096 aa).

27 PPR repeats span residues 122–156 (NPSV…GFNP), 157–191 (SVYT…KICP), 192–226 (DVAT…GYAP), 227–261 (TIVT…GVDA), 262–296 (DVCT…MIHP), 297–331 (NEVT…GLSP), 332–366 (NHVT…GLTP), 367–401 (SEVS…GVCV), 402–436 (GRIT…GIDP), 437–471 (DIVT…GLSP), 472–506 (NGII…GHTR), 507–541 (DHFT…GILP), 542–576 (NTVS…GHHP), 577–607 (TFFT…LHAV), 612–646 (DTVM…SILP), 647–681 (DSYT…GNVL), 683–717 (NKVM…GHTP), 718–752 (DIVT…NGGP), 753–787 (NLTT…GILP), 788–822 (DKLT…GVEV), 823–857 (DRYT…GISL), 858–892 (DKDT…GISP), 893–927 (ESRK…KICP), 928–962 (PNVA…KLVP), 963–997 (TIAS…GLKL), 998–1032 (DLVS…GFLA), and 1033–1068 (NATT…GFIT).

This sequence belongs to the PPR family. P subfamily.

This chain is Pentatricopeptide repeat-containing protein At5g55840, found in Arabidopsis thaliana (Mouse-ear cress).